A 689-amino-acid chain; its full sequence is MANKEYPLAKFRNIGIMAHIDAGKTTATERILFYTGKTHKIGETHEGGATMDWMEQEQERGITITSAATTCFWKDHQVNIIDTPGHVDFTVEVERSLRVLDGAVTILDAKSGVEPQTETVWRQADNYKVPRMVFINKMDKLGADFLMSVGTLRERLHANAVPLQLPIGAEDSFSGIIDLVKNDAVIYKDDLGTVMDETEIPEDMKEIAEEYRTMLLEAVAEVDEDIMMKYLEGEEISVEEIKTALRHGVIANKIVPVLCGSAYKNKGVQLLLDAIVEFMPSPLDIEDVKGTEPTTGEEMTRPADAKAPLAALAFKIATDPFIGKLAFTRIYSGTMKSGTYVFNSNKGKRERIGRLVKMHANHREEVDELKAGELGAIVGLKDTTTGDTLCDDANPIILENMEFPEPVIDVSIEPKTKAGQEKMGIALAKLAEEDPTFRTYTNQETGQTIIAGMGELHLEIIVDRLIREFKVECNVGQPQVAYKETVRKHVKAEGKFVRQSGGRGQYGHCWIEMMPTEGEYEFDNAIVGGAIPKEYIPAIDNGIQEASQSGIIAGYPVINFKVKLVDGSYHDVDSSEMAFKIAGSMAFKNAMSKADAVLLEPSMKVEVVVPEEYMGDVIGDINSRRGRIEGMTPRAGAEVIRAFVPLSEMFGYATTLRSKTQGRGNYVMQFDHYEEVPKSIQDKVIGERK.

The 275-residue stretch at 9–283 folds into the tr-type G domain; the sequence is AKFRNIGIMA…AIVEFMPSPL (275 aa). Residues 18–25, 82–86, and 136–139 contribute to the GTP site; these read AHIDAGKT, DTPGH, and NKMD.

Belongs to the TRAFAC class translation factor GTPase superfamily. Classic translation factor GTPase family. EF-G/EF-2 subfamily.

It localises to the cytoplasm. Functionally, catalyzes the GTP-dependent ribosomal translocation step during translation elongation. During this step, the ribosome changes from the pre-translocational (PRE) to the post-translocational (POST) state as the newly formed A-site-bound peptidyl-tRNA and P-site-bound deacylated tRNA move to the P and E sites, respectively. Catalyzes the coordinated movement of the two tRNA molecules, the mRNA and conformational changes in the ribosome. In Clostridium botulinum (strain Kyoto / Type A2), this protein is Elongation factor G.